Consider the following 135-residue polypeptide: MDKFWTFLTALHSGAGPIVMLLYPLYASVIAMESTTKVDDEQWLAYWIIYSFLSLTELILQSLIEWIPIWYTVKLVFVAWLVLPQFQGAAFIYNRVVREQFKKHGVLRSTHSKPTKPNILHSIFPHREGHEAHSH.

The next 3 helical transmembrane spans lie at 11–31 (LHSG…SVIA), 42–62 (QWLA…ILQS), and 63–83 (LIEW…WLVL).

It belongs to the DP1 family. Predominantly expressed in flower buds.

The protein resides in the membrane. The protein is HVA22-like protein d (HVA22D) of Arabidopsis thaliana (Mouse-ear cress).